Consider the following 582-residue polypeptide: Membrane protein insertase YidC (582 aa).

4 consecutive transmembrane segments (helical) span residues 4–24, 376–396, 446–466, and 542–562; these read NTVL…YIQQ, IIPN…IIFF, ASGC…FGLF, and FMPL…LLFW.

Belongs to the OXA1/ALB3/YidC family. Type 1 subfamily. As to quaternary structure, interacts with the Sec translocase complex via SecD. Specifically interacts with transmembrane segments of nascent integral membrane proteins during membrane integration.

It localises to the cell inner membrane. In terms of biological role, required for the insertion and/or proper folding and/or complex formation of integral membrane proteins into the membrane. Involved in integration of membrane proteins that insert both dependently and independently of the Sec translocase complex, as well as at least some lipoproteins. Aids folding of multispanning membrane proteins. The polypeptide is Membrane protein insertase YidC (Treponema denticola (strain ATCC 35405 / DSM 14222 / CIP 103919 / JCM 8153 / KCTC 15104)).